We begin with the raw amino-acid sequence, 393 residues long: Formate-dependent phosphoribosylglycinamide formyltransferase (393 aa).

N(1)-(5-phospho-beta-D-ribosyl)glycinamide contacts are provided by residues 22–23 (EL) and Glu-82. ATP is bound by residues Arg-114, Lys-155, 160–165 (SSGHGQ), 195–198 (EGFI), and Glu-203. One can recognise an ATP-grasp domain in the interval 119-308 (RLAAEELGLK…QFALHARAIL (190 aa)). Mg(2+) is bound by residues Glu-267 and Glu-279. N(1)-(5-phospho-beta-D-ribosyl)glycinamide is bound by residues Asp-286, Lys-356, and 363 to 364 (RR).

This sequence belongs to the PurK/PurT family. As to quaternary structure, homodimer.

It carries out the reaction N(1)-(5-phospho-beta-D-ribosyl)glycinamide + formate + ATP = N(2)-formyl-N(1)-(5-phospho-beta-D-ribosyl)glycinamide + ADP + phosphate + H(+). It functions in the pathway purine metabolism; IMP biosynthesis via de novo pathway; N(2)-formyl-N(1)-(5-phospho-D-ribosyl)glycinamide from N(1)-(5-phospho-D-ribosyl)glycinamide (formate route): step 1/1. Functionally, involved in the de novo purine biosynthesis. Catalyzes the transfer of formate to 5-phospho-ribosyl-glycinamide (GAR), producing 5-phospho-ribosyl-N-formylglycinamide (FGAR). Formate is provided by PurU via hydrolysis of 10-formyl-tetrahydrofolate. This chain is Formate-dependent phosphoribosylglycinamide formyltransferase, found in Actinobacillus pleuropneumoniae serotype 3 (strain JL03).